A 389-amino-acid polypeptide reads, in one-letter code: Lipid-A-disaccharide synthase (389 aa).

It belongs to the LpxB family.

The enzyme catalyses a lipid X + a UDP-2-N,3-O-bis[(3R)-3-hydroxyacyl]-alpha-D-glucosamine = a lipid A disaccharide + UDP + H(+). It functions in the pathway bacterial outer membrane biogenesis; LPS lipid A biosynthesis. Its function is as follows. Condensation of UDP-2,3-diacylglucosamine and 2,3-diacylglucosamine-1-phosphate to form lipid A disaccharide, a precursor of lipid A, a phosphorylated glycolipid that anchors the lipopolysaccharide to the outer membrane of the cell. This chain is Lipid-A-disaccharide synthase, found in Burkholderia cenocepacia (strain HI2424).